The sequence spans 962 residues: Vacuolar membrane protease (962 aa).

At 1–14 (MLAQFLRSLFRFRK) the chain is on the cytoplasmic side. Residues 15-35 (TTVSVLLVATYVVVFLLNVWD) form a helical membrane-spanning segment. Residues 36-359 (RIRYQYSLPE…FVTASTKDLF (324 aa)) are Vacuolar-facing. N-linked (GlcNAc...) asparagine glycosylation occurs at Asn118. Zn(2+) is bound by residues His153 and Asp165. Glu197 (proton acceptor) is an active-site residue. Glu198, Glu223, and His297 together coordinate Zn(2+). Residues 360–380 (TLNCVVLSVIPVIILVLEFVI) traverse the membrane as a helical segment. Over 381–390 (QRRKTRERNP) the chain is Cytoplasmic. A helical membrane pass occupies residues 391–411 (LLVWLRLPFSMFISYLVTATF). The Vacuolar portion of the chain corresponds to 412–431 (RSSLFRVNPLIFSRDYVSPT). Residues 432-452 (IGFSFTFLILNYLVLSLLEYL) traverse the membrane as a helical segment. The Cytoplasmic segment spans residues 453–460 (APSRDLKT). Residues 461–481 (VSFVELFFGMWIALLWATIRL) form a helical membrane-spanning segment. The Vacuolar portion of the chain corresponds to 482 to 489 (CTSKYTAT). Residues 490-510 (GVYPITVLYLLMSFGAIVGLV) traverse the membrane as a helical segment. At 511-601 (CSAFKRKHSV…VVSALNYDWS (91 aa)) the chain is on the cytoplasmic side. Residues 531 to 554 (APNTYSSIEESPQQATNTEAPNEN) are compositionally biased toward polar residues. The tract at residues 531–563 (APNTYSSIEESPQQATNTEAPNENSPEEHDERA) is disordered. The helical transmembrane segment at 602-622 (VQFLAVVPLASFFVIMCLSLI) threads the bilayer. The Vacuolar segment spans residues 623-639 (LDGIYQTCQEGFQATWN). Residue Asn639 is glycosylated (N-linked (GlcNAc...) asparagine). The helical transmembrane segment at 640 to 660 (VSKISMLGGMLLAIPVLPFCY) threads the bilayer. Lys661 is a topological domain (cytoplasmic). The helical transmembrane segment at 662–682 (LNYFVSMVLLFAAASAGIFSF) threads the bilayer. Topologically, residues 683 to 962 (ERAPFTESSP…LVIVNDYIEL (280 aa)) are vacuolar. 2 N-linked (GlcNAc...) asparagine glycosylation sites follow: Asn812 and Asn839.

The protein belongs to the peptidase M28 family. The cofactor is Zn(2+).

Its subcellular location is the vacuole membrane. Functionally, may be involved in vacuolar sorting and osmoregulation. The polypeptide is Vacuolar membrane protease (Lachancea thermotolerans (strain ATCC 56472 / CBS 6340 / NRRL Y-8284) (Yeast)).